The primary structure comprises 164 residues: 3-isopropylmalate dehydratase small subunit (164 aa).

Belongs to the LeuD family. LeuD type 2 subfamily. As to quaternary structure, heterodimer of LeuC and LeuD.

It catalyses the reaction (2R,3S)-3-isopropylmalate = (2S)-2-isopropylmalate. It functions in the pathway amino-acid biosynthesis; L-leucine biosynthesis; L-leucine from 3-methyl-2-oxobutanoate: step 2/4. Its function is as follows. Catalyzes the isomerization between 2-isopropylmalate and 3-isopropylmalate, via the formation of 2-isopropylmaleate. The protein is 3-isopropylmalate dehydratase small subunit of Lachnospira eligens (strain ATCC 27750 / DSM 3376 / VPI C15-48 / C15-B4) (Eubacterium eligens).